Here is a 213-residue protein sequence, read N- to C-terminus: Orotate phosphoribosyltransferase (213 aa).

Lysine 26 contacts 5-phospho-alpha-D-ribose 1-diphosphate. Orotate is bound at residue 34-35 (FF). 5-phospho-alpha-D-ribose 1-diphosphate-binding positions include 72–73 (YK), arginine 99, lysine 100, lysine 103, histidine 105, and 124–132 (DDVITAGTS). Positions 128 and 156 each coordinate orotate.

Belongs to the purine/pyrimidine phosphoribosyltransferase family. PyrE subfamily. Homodimer. Mg(2+) is required as a cofactor.

The enzyme catalyses orotidine 5'-phosphate + diphosphate = orotate + 5-phospho-alpha-D-ribose 1-diphosphate. Its pathway is pyrimidine metabolism; UMP biosynthesis via de novo pathway; UMP from orotate: step 1/2. Its function is as follows. Catalyzes the transfer of a ribosyl phosphate group from 5-phosphoribose 1-diphosphate to orotate, leading to the formation of orotidine monophosphate (OMP). The sequence is that of Orotate phosphoribosyltransferase from Methylococcus capsulatus (strain ATCC 33009 / NCIMB 11132 / Bath).